The sequence spans 176 residues: ATP-dependent protease subunit HslV (176 aa).

Residue T2 is part of the active site. Positions 157, 160, and 163 each coordinate Na(+).

Belongs to the peptidase T1B family. HslV subfamily. As to quaternary structure, a double ring-shaped homohexamer of HslV is capped on each side by a ring-shaped HslU homohexamer. The assembly of the HslU/HslV complex is dependent on binding of ATP.

The protein resides in the cytoplasm. The catalysed reaction is ATP-dependent cleavage of peptide bonds with broad specificity.. Allosterically activated by HslU binding. Functionally, protease subunit of a proteasome-like degradation complex believed to be a general protein degrading machinery. The chain is ATP-dependent protease subunit HslV from Proteus mirabilis (strain HI4320).